The primary structure comprises 803 residues: Translation initiation factor IF-2 (803 aa).

Disordered stretches follow at residues 93–123 (TKPVVEQKRETEPAPTQEVPPTSDTTNLNEK) and 138–206 (EVKE…ASAK). Residues 111-121 (VPPTSDTTNLN) show a composition bias toward polar residues. Residues 138 to 155 (EVKEEAKKTPSEKKETPK) are compositionally biased toward basic and acidic residues. Positions 156-167 (KGPRKETRRSRK) are enriched in basic residues. Residues 168–188 (PDKEDKWEREELHMTKLVEER) show a composition bias toward basic and acidic residues. The 170-residue stretch at 302-471 (PRAPVVTIMG…LLQAEVLELK (170 aa)) folds into the tr-type G domain. The G1 stretch occupies residues 311 to 318 (GHVDHGKT). 311-318 (GHVDHGKT) provides a ligand contact to GTP. A G2 region spans residues 336–340 (GITQH). The interval 357–360 (DTPG) is G3. GTP is bound by residues 357–361 (DTPGH) and 411–414 (NKID). The interval 411–414 (NKID) is G4. Residues 447–449 (SAK) are G5.

This sequence belongs to the TRAFAC class translation factor GTPase superfamily. Classic translation factor GTPase family. IF-2 subfamily.

Its subcellular location is the cytoplasm. In terms of biological role, one of the essential components for the initiation of protein synthesis. Protects formylmethionyl-tRNA from spontaneous hydrolysis and promotes its binding to the 30S ribosomal subunits. Also involved in the hydrolysis of GTP during the formation of the 70S ribosomal complex. The sequence is that of Translation initiation factor IF-2 from Coxiella burnetii (strain RSA 493 / Nine Mile phase I).